Reading from the N-terminus, the 527-residue chain is Arginine--tRNA ligase (527 aa).

The 'HIGH' region signature appears at 108–118 (ANPTGPLHIGH).

It belongs to the class-I aminoacyl-tRNA synthetase family. Monomer.

It localises to the cytoplasm. The enzyme catalyses tRNA(Arg) + L-arginine + ATP = L-arginyl-tRNA(Arg) + AMP + diphosphate. This Sulfurimonas denitrificans (strain ATCC 33889 / DSM 1251) (Thiomicrospira denitrificans (strain ATCC 33889 / DSM 1251)) protein is Arginine--tRNA ligase.